Reading from the N-terminus, the 363-residue chain is 3-dehydroquinate synthase (363 aa).

NAD(+) is bound by residues 71-76, 105-109, 129-130, Lys142, Lys151, and 169-172; these read DGEQYK, GVIGD, TT, and CLKT. Zn(2+) is bound by residues Glu184, His247, and His264.

This sequence belongs to the sugar phosphate cyclases superfamily. Dehydroquinate synthase family. NAD(+) is required as a cofactor. It depends on Co(2+) as a cofactor. Zn(2+) serves as cofactor.

Its subcellular location is the cytoplasm. The enzyme catalyses 7-phospho-2-dehydro-3-deoxy-D-arabino-heptonate = 3-dehydroquinate + phosphate. Its pathway is metabolic intermediate biosynthesis; chorismate biosynthesis; chorismate from D-erythrose 4-phosphate and phosphoenolpyruvate: step 2/7. Its function is as follows. Catalyzes the conversion of 3-deoxy-D-arabino-heptulosonate 7-phosphate (DAHP) to dehydroquinate (DHQ). This is 3-dehydroquinate synthase from Vibrio vulnificus (strain CMCP6).